The primary structure comprises 87 residues: Small ribosomal subunit protein bS16 (87 aa).

The protein belongs to the bacterial ribosomal protein bS16 family.

This is Small ribosomal subunit protein bS16 from Variovorax paradoxus (strain S110).